The sequence spans 126 residues: Precursor of CEP2 (126 aa).

Residues 1–19 (MKLFIITVVTILTISRVFD) form the signal peptide. The propeptide occupies 20–80 (KTPATTEARK…ENNLKNRFIN (61 aa)). P84 and P87 each carry hydroxyproline. The propeptide occupies 96 to 105 (PRVLNNKFTN). A hydroxyproline mark is found at P109, P112, and P116. Positions 121–126 (PGVVNV) are excised as a propeptide.

Belongs to the C-terminally encoded plant signaling peptide (CEP) family. As to quaternary structure, interacts with CEP receptors (e.g. CEPR1 and CEPR2). Post-translationally, the mature small signaling peptide is generated by proteolytic processing of the longer precursor. As to expression, mostly expressed in roots. Present in cotyledons, shoot apical meristem (SAM), leaves, inflorescence stems and flowers.

Its subcellular location is the secreted. The protein localises to the extracellular space. It is found in the apoplast. In terms of biological role, extracellular signaling peptide that represses primary root growth rate. Negatively regulates the number of leaves and flowering, and modulates leaf morphology. Regulates systemic nitrogen (N)-demand signaling. Mediates up-regulation of genes involved in N uptake and assimilation pathways. The protein is Precursor of CEP2 of Arabidopsis thaliana (Mouse-ear cress).